A 351-amino-acid polypeptide reads, in one-letter code: Divinyl chlorophyll a/b light-harvesting protein PcbA (351 aa).

The next 6 helical transmembrane spans lie at 27–47, 64–84, 89–109, 202–222, 242–262, and 305–325; these read FIAA…AFTL, LIAL…GTFV, VTAI…GGLL, VMGG…FHIA, AILS…AFWC, and LTNV…WHAL.

Belongs to the PsbB/PsbC family. IsiA/Pcb subfamily. In terms of assembly, the antenna complex consists of divinyl chlorophylls (a and b) and divinyl chlorophyll a/b binding proteins and binds more divinyl chlorophyll b than does the antenna complex from high-light-adapted Prochlorococcus. The cofactor is divinyl chlorophyll a. It depends on divinyl chlorophyll b as a cofactor.

Its subcellular location is the cellular thylakoid membrane. In terms of biological role, the antenna complex functions as a light receptor, it captures and delivers excitation energy to photosystems II and I. The Prochlorales pcb genes are not related to higher plant LHCs. This is Divinyl chlorophyll a/b light-harvesting protein PcbA (pcbA) from Prochlorococcus marinus (strain SARG / CCMP1375 / SS120).